Reading from the N-terminus, the 434-residue chain is Trigger factor (434 aa).

The PPIase FKBP-type domain occupies 161–246; that stretch reads EDRVTVDFTG…LKKVEQRELP (86 aa).

This sequence belongs to the FKBP-type PPIase family. Tig subfamily.

Its subcellular location is the cytoplasm. It carries out the reaction [protein]-peptidylproline (omega=180) = [protein]-peptidylproline (omega=0). In terms of biological role, involved in protein export. Acts as a chaperone by maintaining the newly synthesized protein in an open conformation. Functions as a peptidyl-prolyl cis-trans isomerase. The protein is Trigger factor of Sodalis glossinidius (strain morsitans).